Reading from the N-terminus, the 248-residue chain is UDP-2,3-diacylglucosamine hydrolase (248 aa).

Residues Asp-7, His-9, Asp-40, Asn-78, and His-113 each coordinate Mn(2+). Substrate is bound at residue 78–79 (NR). Substrate contacts are provided by Asp-121, Ser-159, Thr-163, Lys-166, and His-194. 2 residues coordinate Mn(2+): His-194 and His-196.

This sequence belongs to the LpxH family. Requires Mn(2+) as cofactor.

It localises to the cell inner membrane. It carries out the reaction UDP-2-N,3-O-bis[(3R)-3-hydroxytetradecanoyl]-alpha-D-glucosamine + H2O = 2-N,3-O-bis[(3R)-3-hydroxytetradecanoyl]-alpha-D-glucosaminyl 1-phosphate + UMP + 2 H(+). It participates in glycolipid biosynthesis; lipid IV(A) biosynthesis; lipid IV(A) from (3R)-3-hydroxytetradecanoyl-[acyl-carrier-protein] and UDP-N-acetyl-alpha-D-glucosamine: step 4/6. Hydrolyzes the pyrophosphate bond of UDP-2,3-diacylglucosamine to yield 2,3-diacylglucosamine 1-phosphate (lipid X) and UMP by catalyzing the attack of water at the alpha-P atom. Involved in the biosynthesis of lipid A, a phosphorylated glycolipid that anchors the lipopolysaccharide to the outer membrane of the cell. This chain is UDP-2,3-diacylglucosamine hydrolase, found in Pseudomonas savastanoi pv. phaseolicola (strain 1448A / Race 6) (Pseudomonas syringae pv. phaseolicola (strain 1448A / Race 6)).